Here is a 328-residue protein sequence, read N- to C-terminus: Tetraacyldisaccharide 4'-kinase (328 aa).

55–62 (TAGGNGKT) provides a ligand contact to ATP.

Belongs to the LpxK family.

The catalysed reaction is a lipid A disaccharide + ATP = a lipid IVA + ADP + H(+). Its pathway is glycolipid biosynthesis; lipid IV(A) biosynthesis; lipid IV(A) from (3R)-3-hydroxytetradecanoyl-[acyl-carrier-protein] and UDP-N-acetyl-alpha-D-glucosamine: step 6/6. In terms of biological role, transfers the gamma-phosphate of ATP to the 4'-position of a tetraacyldisaccharide 1-phosphate intermediate (termed DS-1-P) to form tetraacyldisaccharide 1,4'-bis-phosphate (lipid IVA). The chain is Tetraacyldisaccharide 4'-kinase from Escherichia coli O7:K1 (strain IAI39 / ExPEC).